Consider the following 539-residue polypeptide: CTP synthase (539 aa).

Positions 1–267 (MKEAKFIFVT…GTQVLEHFHL (267 aa)) are amidoligase domain. Ser-15 lines the CTP pocket. Ser-15 contacts UTP. Residues 16 to 21 (SLGKGL) and Asp-73 contribute to the ATP site. Residues Asp-73 and Glu-141 each coordinate Mg(2+). Residues 148 to 150 (DIE), 188 to 193 (KTKPTQ), and Lys-224 each bind CTP. UTP contacts are provided by residues 188–193 (KTKPTQ) and Lys-224. The Glutamine amidotransferase type-1 domain occupies 292 to 536 (TVSIVGKYTE…IKAVVNKVKK (245 aa)). Residue Gly-359 participates in L-glutamine binding. Cys-386 (nucleophile; for glutamine hydrolysis) is an active-site residue. L-glutamine is bound by residues 387–390 (LGMQ), Glu-410, and Arg-464. Catalysis depends on residues His-509 and Glu-511.

This sequence belongs to the CTP synthase family. In terms of assembly, homotetramer.

It catalyses the reaction UTP + L-glutamine + ATP + H2O = CTP + L-glutamate + ADP + phosphate + 2 H(+). It carries out the reaction L-glutamine + H2O = L-glutamate + NH4(+). The catalysed reaction is UTP + NH4(+) + ATP = CTP + ADP + phosphate + 2 H(+). It participates in pyrimidine metabolism; CTP biosynthesis via de novo pathway; CTP from UDP: step 2/2. With respect to regulation, allosterically activated by GTP, when glutamine is the substrate; GTP has no effect on the reaction when ammonia is the substrate. The allosteric effector GTP functions by stabilizing the protein conformation that binds the tetrahedral intermediate(s) formed during glutamine hydrolysis. Inhibited by the product CTP, via allosteric rather than competitive inhibition. Its function is as follows. Catalyzes the ATP-dependent amination of UTP to CTP with either L-glutamine or ammonia as the source of nitrogen. Regulates intracellular CTP levels through interactions with the four ribonucleotide triphosphates. This chain is CTP synthase, found in Wolbachia sp. subsp. Brugia malayi (strain TRS).